Consider the following 268-residue polypeptide: 2,5-diamino-6-ribosylamino-4(3H)-pyrimidinone 5'-phosphate reductase (268 aa).

NADP(+) is bound by residues Thr68, Asp72, 103-106, and 191-195; these read SNLR and GAELL.

It belongs to the HTP reductase family. In terms of assembly, homodimer.

The catalysed reaction is 2,5-diamino-6-(1-D-ribitylamino)pyrimidin-4(3H)-one 5'-phosphate + NADP(+) = 2,5-diamino-6-(1-D-ribosylamino)pyrimidin-4(3H)-one 5'-phosphate + NADPH + H(+). The enzyme catalyses 2,5-diamino-6-(1-D-ribitylamino)pyrimidin-4(3H)-one 5'-phosphate + NAD(+) = 2,5-diamino-6-(1-D-ribosylamino)pyrimidin-4(3H)-one 5'-phosphate + NADH + H(+). It participates in cofactor biosynthesis; riboflavin biosynthesis. Functionally, catalyzes an early step in riboflavin biosynthesis, the NADPH-dependent reduction of the ribose side chain of 2,5-diamino-6-ribosylamino-4(3H)-pyrimidinone 5'-phosphate, yielding 2,5-diamino-6-ribitylamino-4(3H)-pyrimidinone 5'-phosphate. The chain is 2,5-diamino-6-ribosylamino-4(3H)-pyrimidinone 5'-phosphate reductase from Schizosaccharomyces pombe (strain 972 / ATCC 24843) (Fission yeast).